The chain runs to 438 residues: GTPase Der (438 aa).

2 consecutive EngA-type G domains span residues 4-168 (PLVT…KSEG) and 177-352 (IKIA…DNYS). GTP-binding positions include 10-17 (GRPNVGKS), 57-61 (DTGGI), 120-123 (NKID), 183-190 (GKPNVGKS), 230-234 (DTAGL), and 295-298 (NKWD). In terms of domain architecture, KH-like spans 353-437 (KRIATGVLND…GIKMIFKERK (85 aa)).

This sequence belongs to the TRAFAC class TrmE-Era-EngA-EngB-Septin-like GTPase superfamily. EngA (Der) GTPase family. As to quaternary structure, associates with the 50S ribosomal subunit.

Its function is as follows. GTPase that plays an essential role in the late steps of ribosome biogenesis. The protein is GTPase Der of Clostridium acetobutylicum (strain ATCC 824 / DSM 792 / JCM 1419 / IAM 19013 / LMG 5710 / NBRC 13948 / NRRL B-527 / VKM B-1787 / 2291 / W).